Consider the following 445-residue polypeptide: Argininosuccinate synthase (445 aa).

ATP-binding positions include 17-25 (AFSGGLDTS) and A43. Y99 contributes to the L-citrulline binding site. ATP-binding residues include G129 and T131. L-aspartate contacts are provided by T131, N135, and D136. Residue N135 participates in L-citrulline binding. An ATP-binding site is contributed by D136. Residues R139 and S192 each contribute to the L-citrulline site. D194 lines the ATP pocket. Residues T201, E203, and E280 each coordinate L-citrulline.

This sequence belongs to the argininosuccinate synthase family. Type 2 subfamily. In terms of assembly, homotetramer.

It is found in the cytoplasm. The enzyme catalyses L-citrulline + L-aspartate + ATP = 2-(N(omega)-L-arginino)succinate + AMP + diphosphate + H(+). It participates in amino-acid biosynthesis; L-arginine biosynthesis; L-arginine from L-ornithine and carbamoyl phosphate: step 2/3. This chain is Argininosuccinate synthase, found in Bordetella petrii (strain ATCC BAA-461 / DSM 12804 / CCUG 43448).